The chain runs to 341 residues: 3-dehydroquinate synthase (341 aa).

NAD(+) is bound by residues 54–59, 88–92, 112–113, K125, K133, and 151–154; these read DGEKYK, GVVTD, TT, and TLST. The Zn(2+) site is built by E166, H220, and H236.

Belongs to the sugar phosphate cyclases superfamily. Dehydroquinate synthase family. NAD(+) serves as cofactor. Requires Co(2+) as cofactor. It depends on Zn(2+) as a cofactor.

Its subcellular location is the cytoplasm. It carries out the reaction 7-phospho-2-dehydro-3-deoxy-D-arabino-heptonate = 3-dehydroquinate + phosphate. It functions in the pathway metabolic intermediate biosynthesis; chorismate biosynthesis; chorismate from D-erythrose 4-phosphate and phosphoenolpyruvate: step 2/7. Functionally, catalyzes the conversion of 3-deoxy-D-arabino-heptulosonate 7-phosphate (DAHP) to dehydroquinate (DHQ). This Thermococcus kodakarensis (strain ATCC BAA-918 / JCM 12380 / KOD1) (Pyrococcus kodakaraensis (strain KOD1)) protein is 3-dehydroquinate synthase.